A 27-amino-acid chain; its full sequence is Nucleoside diphosphate kinase 2 (27 aa).

Residue K3 participates in ATP binding.

This sequence belongs to the NDK family. The cofactor is Mg(2+).

The catalysed reaction is a 2'-deoxyribonucleoside 5'-diphosphate + ATP = a 2'-deoxyribonucleoside 5'-triphosphate + ADP. It carries out the reaction a ribonucleoside 5'-diphosphate + ATP = a ribonucleoside 5'-triphosphate + ADP. In terms of biological role, major role in the synthesis of nucleoside triphosphates other than ATP. The ATP gamma phosphate is transferred to the NDP beta phosphate via a ping-pong mechanism, using a phosphorylated active-site intermediate. The sequence is that of Nucleoside diphosphate kinase 2 from Pseudotsuga menziesii (Douglas-fir).